Here is a 144-residue protein sequence, read N- to C-terminus: Large ribosomal subunit protein uL15 (144 aa).

A disordered region spans residues 1–56; it reads MELNNLKPAAGAKHAKRRVGRGIGSGLGKTAGRGHKGQKSRSGGFHKVGFEGGQMP. Gly residues predominate over residues 21–31; the sequence is RGIGSGLGKTA.

This sequence belongs to the universal ribosomal protein uL15 family. As to quaternary structure, part of the 50S ribosomal subunit.

Functionally, binds to the 23S rRNA. This Burkholderia cenocepacia (strain HI2424) protein is Large ribosomal subunit protein uL15.